Consider the following 192-residue polypeptide: Holliday junction branch migration complex subunit RuvA (192 aa).

Residues methionine 1 to leucine 64 are domain I. A domain II region spans residues threonine 65–alanine 139. The interval alanine 139 to lysine 143 is flexible linker. Positions proline 144–arginine 192 are domain III.

The protein belongs to the RuvA family. As to quaternary structure, homotetramer. Forms an RuvA(8)-RuvB(12)-Holliday junction (HJ) complex. HJ DNA is sandwiched between 2 RuvA tetramers; dsDNA enters through RuvA and exits via RuvB. An RuvB hexamer assembles on each DNA strand where it exits the tetramer. Each RuvB hexamer is contacted by two RuvA subunits (via domain III) on 2 adjacent RuvB subunits; this complex drives branch migration. In the full resolvosome a probable DNA-RuvA(4)-RuvB(12)-RuvC(2) complex forms which resolves the HJ.

The protein localises to the cytoplasm. Its function is as follows. The RuvA-RuvB-RuvC complex processes Holliday junction (HJ) DNA during genetic recombination and DNA repair, while the RuvA-RuvB complex plays an important role in the rescue of blocked DNA replication forks via replication fork reversal (RFR). RuvA specifically binds to HJ cruciform DNA, conferring on it an open structure. The RuvB hexamer acts as an ATP-dependent pump, pulling dsDNA into and through the RuvAB complex. HJ branch migration allows RuvC to scan DNA until it finds its consensus sequence, where it cleaves and resolves the cruciform DNA. In Methylibium petroleiphilum (strain ATCC BAA-1232 / LMG 22953 / PM1), this protein is Holliday junction branch migration complex subunit RuvA.